The primary structure comprises 705 residues: Elongation factor G (705 aa).

Residues 8–290 enclose the tr-type G domain; it reads ERYRNFGIMA…GVVHLLPSPA (283 aa). GTP-binding positions include 17 to 24, 88 to 92, and 142 to 145; these read AHIDAGKT, DTPGH, and NKMD. Positions 290 to 309 are disordered; that stretch reads ADRPPVQGIDEDEKEDTRAA.

It belongs to the TRAFAC class translation factor GTPase superfamily. Classic translation factor GTPase family. EF-G/EF-2 subfamily.

The protein localises to the cytoplasm. Its function is as follows. Catalyzes the GTP-dependent ribosomal translocation step during translation elongation. During this step, the ribosome changes from the pre-translocational (PRE) to the post-translocational (POST) state as the newly formed A-site-bound peptidyl-tRNA and P-site-bound deacylated tRNA move to the P and E sites, respectively. Catalyzes the coordinated movement of the two tRNA molecules, the mRNA and conformational changes in the ribosome. This is Elongation factor G from Xanthomonas axonopodis pv. citri (strain 306).